The primary structure comprises 49 residues: Metallothionein (49 aa).

The segment at 1 to 16 (SCAGSCKCKNCRCRSC) is beta. The a divalent metal cation site is built by Cys2, Cys6, Cys8, Cys11, Cys13, Cys16, Cys20, Cys21, Cys23, Cys24, Cys28, Cys31, Cys35, Cys37, Cys45, Cys47, and Cys48. Residues 17–49 (RKSCCSCCPAGCNNCAKGCVCKEPASSKCSCCH) are alpha.

This sequence belongs to the metallothionein superfamily. Type 1 family.

Its function is as follows. Metallothioneins have a high content of cysteine residues that bind various heavy metals. The sequence is that of Metallothionein from Phasianus colchicus colchicus (Black-necked pheasant).